The sequence spans 206 residues: Dual specificity phosphatase 29 (206 aa).

The Tyrosine-protein phosphatase domain maps to 47-194 (HVNQVWPSVY…LRALDITLQE (148 aa)). 138–145 (HCVMGRSR) contacts substrate. Residue Cys139 is the Phosphocysteine intermediate of the active site.

This sequence belongs to the protein-tyrosine phosphatase family. Non-receptor class dual specificity subfamily.

It localises to the cytoplasm. Its subcellular location is the nucleus. It catalyses the reaction O-phospho-L-tyrosyl-[protein] + H2O = L-tyrosyl-[protein] + phosphate. It carries out the reaction O-phospho-L-seryl-[protein] + H2O = L-seryl-[protein] + phosphate. The enzyme catalyses O-phospho-L-threonyl-[protein] + H2O = L-threonyl-[protein] + phosphate. Dual specificity phosphatase able to dephosphorylate phosphotyrosine, phosphoserine and phosphothreonine residues within the same substrate, with a preference for phosphotyrosine as a substrate. Involved in the modulation of AMPK and MAPK1/2 signaling pathways. In Gasterosteus aculeatus (Three-spined stickleback), this protein is Dual specificity phosphatase 29 (dusp29).